The primary structure comprises 673 residues: DNA ligase (673 aa).

NAD(+) contacts are provided by residues 32–36 (DHVYD), 81–82 (SL), and E111. K113 (N6-AMP-lysine intermediate) is an active-site residue. Residues R134, E171, K286, and K310 each coordinate NAD(+). C404, C407, C422, and C428 together coordinate Zn(2+). The BRCT domain maps to 595-673 (NIIDEYKNKT…NEFWKKDNNF (79 aa)).

The protein belongs to the NAD-dependent DNA ligase family. LigA subfamily. The cofactor is Mg(2+). Mn(2+) is required as a cofactor.

The catalysed reaction is NAD(+) + (deoxyribonucleotide)n-3'-hydroxyl + 5'-phospho-(deoxyribonucleotide)m = (deoxyribonucleotide)n+m + AMP + beta-nicotinamide D-nucleotide.. In terms of biological role, DNA ligase that catalyzes the formation of phosphodiester linkages between 5'-phosphoryl and 3'-hydroxyl groups in double-stranded DNA using NAD as a coenzyme and as the energy source for the reaction. It is essential for DNA replication and repair of damaged DNA. The sequence is that of DNA ligase from Ureaplasma parvum serovar 3 (strain ATCC 27815 / 27 / NCTC 11736).